Here is a 283-residue protein sequence, read N- to C-terminus: MLRVAVPNKGTLSEPAAEILSEAGYRRRTDTKDLTVVDPANNVEFFFLRPKDIAIYVGSGQLDLGITGRDLAAESDAPVRERLALGFGSSTFRYAAPAGRDWAPEDLAGRRIATAFPNLVRKDLAGRGIEATVIRLDGAVEISVALGVADAIADVVGSGRTLGLHNLVAFGDSLCDSEAVLIERDGAGDENAAARDQLTARVQGVVFGQQYLMLDYDCPRHVLDRATEVTPGLESPTIAPLADQDWVAVRALVPRRDVNSIMDELAAIGAKAILASDIRFCRF.

This sequence belongs to the ATP phosphoribosyltransferase family. Long subfamily. Equilibrium between an active dimeric form, an inactive hexameric form and higher aggregates. Interconversion between the various forms is largely reversible and is influenced by the natural substrates and inhibitors of the enzyme. It depends on Mg(2+) as a cofactor.

The protein localises to the cytoplasm. The enzyme catalyses 1-(5-phospho-beta-D-ribosyl)-ATP + diphosphate = 5-phospho-alpha-D-ribose 1-diphosphate + ATP. The protein operates within amino-acid biosynthesis; L-histidine biosynthesis; L-histidine from 5-phospho-alpha-D-ribose 1-diphosphate: step 1/9. With respect to regulation, feedback inhibited by histidine. Functionally, catalyzes the condensation of ATP and 5-phosphoribose 1-diphosphate to form N'-(5'-phosphoribosyl)-ATP (PR-ATP). Has a crucial role in the pathway because the rate of histidine biosynthesis seems to be controlled primarily by regulation of HisG enzymatic activity. The chain is ATP phosphoribosyltransferase from Mycobacterium sp. (strain JLS).